Here is a 342-residue protein sequence, read N- to C-terminus: MKRMIALDGAQGEGGGQIMRSALSLSMITGQPFTITGIRAGRAKPGLLRQHLTAVKAATEICGATVEGAELGSQRLVFRPGTVRGGDYRFAIGSAGSCTLVLQTVLPALWFADGPSRVEVSGGTDNPSAPPADFIRRVLEPLLAKIGIHQQTTLLRHGFYPAGGGVVATEVSPVASFNTLQLGERGNIVQMRGEVLLAGVPRHVAEREIATLAASFSLHEQNIHNLPRDQGPGNTVSLEVESENITERFFVVGEKRVSAEVVAAQLVKEVKRYLASPAAVGEYLADQLVLPMALAGAGQFTVAHPSCHLLTNIAVVERFLPVRFTLAETDGVTRVMITKLTD.

ATP contacts are provided by residues Q103 and 283 to 287; that span reads YLADQ. H308 acts as the Tele-AMP-histidine intermediate in catalysis.

It belongs to the RNA 3'-terminal cyclase family. Type 1 subfamily.

It localises to the cytoplasm. The catalysed reaction is a 3'-end 3'-phospho-ribonucleotide-RNA + ATP = a 3'-end 2',3'-cyclophospho-ribonucleotide-RNA + AMP + diphosphate. Its function is as follows. Catalyzes the conversion of 3'-phosphate to a 2',3'-cyclic phosphodiester at the end of RNA. The mechanism of action of the enzyme occurs in 3 steps: (A) adenylation of the enzyme by ATP; (B) transfer of adenylate to an RNA-N3'P to produce RNA-N3'PP5'A; (C) and attack of the adjacent 2'-hydroxyl on the 3'-phosphorus in the diester linkage to produce the cyclic end product. The biological role of this enzyme is unknown but it is likely to function in some aspects of cellular RNA processing. The protein is RNA 3'-terminal phosphate cyclase (rtcA) of Escherichia coli O157:H7.